A 1357-amino-acid chain; its full sequence is DNA-directed RNA polymerase subunit beta (1357 aa).

This sequence belongs to the RNA polymerase beta chain family. As to quaternary structure, the RNAP catalytic core consists of 2 alpha, 1 beta, 1 beta' and 1 omega subunit. When a sigma factor is associated with the core the holoenzyme is formed, which can initiate transcription.

It carries out the reaction RNA(n) + a ribonucleoside 5'-triphosphate = RNA(n+1) + diphosphate. In terms of biological role, DNA-dependent RNA polymerase catalyzes the transcription of DNA into RNA using the four ribonucleoside triphosphates as substrates. The polypeptide is DNA-directed RNA polymerase subunit beta (Ectopseudomonas mendocina (strain ymp) (Pseudomonas mendocina)).